Reading from the N-terminus, the 122-residue chain is Ribonuclease P protein component (122 aa).

The protein belongs to the RnpA family. In terms of assembly, consists of a catalytic RNA component (M1 or rnpB) and a protein subunit.

It carries out the reaction Endonucleolytic cleavage of RNA, removing 5'-extranucleotides from tRNA precursor.. RNaseP catalyzes the removal of the 5'-leader sequence from pre-tRNA to produce the mature 5'-terminus. It can also cleave other RNA substrates such as 4.5S RNA. The protein component plays an auxiliary but essential role in vivo by binding to the 5'-leader sequence and broadening the substrate specificity of the ribozyme. The chain is Ribonuclease P protein component from Halorhodospira halophila (strain DSM 244 / SL1) (Ectothiorhodospira halophila (strain DSM 244 / SL1)).